The chain runs to 172 residues: Auxin-responsive protein IAA30 (172 aa).

Over residues 1–18 (MGRGRSSSSSSIESSCKS) the composition is skewed to low complexity. Positions 1–28 (MGRGRSSSSSSIESSCKSNPFGVSSSNT) are disordered. The EAR-like (transcriptional repression) motif lies at 35–39 (LRLGL). Residues 82-171 (SFYVKVNMEG…RRLKISRAYH (90 aa)) form the PB1 domain.

It belongs to the Aux/IAA family. As to quaternary structure, homodimers and heterodimers.

The protein resides in the nucleus. In terms of biological role, aux/IAA proteins are short-lived transcriptional factors that function as repressors of early auxin response genes at low auxin concentrations. Repression is thought to result from the interaction with auxin response factors (ARFs), proteins that bind to the auxin-responsive promoter element (AuxRE). Formation of heterodimers with ARF proteins may alter their ability to modulate early auxin response genes expression. This Arabidopsis thaliana (Mouse-ear cress) protein is Auxin-responsive protein IAA30 (IAA30).